A 137-amino-acid polypeptide reads, in one-letter code: Large-conductance mechanosensitive channel (137 aa).

The next 2 membrane-spanning stretches (helical) occupy residues 9-29 (AFAV…GAAF) and 79-99 (IQSV…VKAI).

The protein belongs to the MscL family. In terms of assembly, homopentamer.

Its subcellular location is the cell inner membrane. Functionally, channel that opens in response to stretch forces in the membrane lipid bilayer. May participate in the regulation of osmotic pressure changes within the cell. In Pseudomonas fluorescens (strain Pf0-1), this protein is Large-conductance mechanosensitive channel.